The following is a 606-amino-acid chain: NADH-ubiquinone oxidoreductase chain 5 (606 aa).

15 helical membrane passes run 4–24, 43–63, 87–107, 117–137, 140–160, 171–191, 213–233, 241–261, 272–292, 310–330, 366–386, 413–433, 457–477, 482–502, and 582–602; these read FSSL…MMSL, AFIT…ELII, MMFT…SMWY, FFKY…ANNL, LFIG…WWYG, AVLY…WFLT, LIGL…HPWL, TPVS…FLLI, FIQS…AMCA, LGLM…LHIC, MPFT…MPFL, LIAT…ALLG, LLIG…PTTI, MPYY…ILAL, and GLIK…MMLF.

Core subunit of respiratory chain NADH dehydrogenase (Complex I) which is composed of 45 different subunits.

It is found in the mitochondrion inner membrane. The enzyme catalyses a ubiquinone + NADH + 5 H(+)(in) = a ubiquinol + NAD(+) + 4 H(+)(out). Its function is as follows. Core subunit of the mitochondrial membrane respiratory chain NADH dehydrogenase (Complex I) which catalyzes electron transfer from NADH through the respiratory chain, using ubiquinone as an electron acceptor. Essential for the catalytic activity and assembly of complex I. This Bos indicus (Zebu) protein is NADH-ubiquinone oxidoreductase chain 5 (MT-ND5).